A 236-amino-acid chain; its full sequence is Ring protein 1 (236 aa).

In terms of assembly, homododecamer.

The protein resides in the virion. Forms the tail multi-ring barrel with ring protein 2, ring protein 3 and ring protein 4. The protein is Ring protein 1 of Bacteroides intestinalis (Bacteroides phage PhiCrAss001).